A 416-amino-acid polypeptide reads, in one-letter code: Serine hydroxymethyltransferase (416 aa).

(6S)-5,6,7,8-tetrahydrofolate contacts are provided by residues L118 and 122 to 124 (GHL). At K226 the chain carries N6-(pyridoxal phosphate)lysine. (6S)-5,6,7,8-tetrahydrofolate is bound at residue 350–352 (SPF).

Belongs to the SHMT family. Homodimer. Requires pyridoxal 5'-phosphate as cofactor.

The protein localises to the cytoplasm. The catalysed reaction is (6R)-5,10-methylene-5,6,7,8-tetrahydrofolate + glycine + H2O = (6S)-5,6,7,8-tetrahydrofolate + L-serine. It participates in one-carbon metabolism; tetrahydrofolate interconversion. The protein operates within amino-acid biosynthesis; glycine biosynthesis; glycine from L-serine: step 1/1. Its function is as follows. Catalyzes the reversible interconversion of serine and glycine with tetrahydrofolate (THF) serving as the one-carbon carrier. This reaction serves as the major source of one-carbon groups required for the biosynthesis of purines, thymidylate, methionine, and other important biomolecules. Also exhibits THF-independent aldolase activity toward beta-hydroxyamino acids, producing glycine and aldehydes, via a retro-aldol mechanism. The polypeptide is Serine hydroxymethyltransferase (Sulfurovum sp. (strain NBC37-1)).